Reading from the N-terminus, the 1243-residue chain is MIMFLPVGRMSLGILILFLTGGNLVSASEERQEPMHAVSVLSPEKSTDLSLPTRKRQLLDATETGRRWLLRRRRSILFPNGVKICSSETVAEAVANHVKYFKARVCQEAIWEAFRTFWDRLPGRDEYRHWMNLCEDGVTSVFEMGAHFSQSVEHRNLIMKKLAYTREAESSSCKDQSCGPELSFPVPIGETSTLTGAVSSASYPGLASESSAASPQESISNEIENVTEEPTQPAAEQIAEFSIQLLGKRYSEELRDPSSALYRLLVEEFISEVEKAFTGLPGYKGIRVLEFRAPEENDSGIDVHYAVTFNGEAISNTTWDLISLHSNKVENHGLVEMDDKPTAVYTISNFRDYIAETLHQNFLMGNSSLNPDPKSLQLINVRGVLLPQTEDIVWNTQSSSLQVTTSSILDNTLQAEWLSADTTTTTTTTISPFGFSSSSPSATGRELQSQSALRDVVSTSKLASPTKVVLSSLPEILGGSSLTLHSVTPAVLQPDLPVAPEGRTSGSFILEDGLASTEELEDTSIDGLPSSPLIQPVPKETVPPMEDSDTALLSTPHLTSSAIEDLTKDIGTPSGLESLASNISDQLEVIPWFPDTSVEKDFIFESGLGSGSGKDVDVIDWPWSETSLEKTTKPLSKSWSEEQDALLPTEGREKLHIDGRVDSTEQIIESSEHRYGDRPIHFIEEESHVRSTIPIFVESATPPTSPIFSKHTSDVPDIDSYSLTKPPFLPVTIAIPASTKKTDEVLKEDMVHTESSSHKELDSEVPVSRPDMQPVWTMLPESDTVWTRTSSLGKLSRDTLASTPESTDRLWLKASMTQSTELPSTTHSTQLEEEVIMAVQDISLELDQVGTDYYQSELTEEQHGKADSYVEMSTSVHYTEMPIVALPTKGGVLSHTQTAGALVVFFSLRVTNMLFSEDLFNKNSLEYKALEQRFLELLVPYLQSNLSGFQNLEILSFRNGSIVVNSRVRFAESAPPNVNKAMYRILEDFCTTAYQTMNLDIDKYSLDVESGDEANPCKFQACNEFSECLVNPWSGEAKCKCYPGYLSVDELPCQSLCDLQPDFCLNDGKCDIMPGHGAICRCRVGSNWWYRGQHCEEFVSEPFVIGITIASVVSFLLVASAVVFFLVKMLQAQNVRRERQRPTSSSRHPDSLSSVENAMKYNPAYESHLAGCELYEKSYSQHPFYSSASEEVIGGLSREEIRQMYESSDLSKEEIQERMRILELYANDPEFAAFVREHQMEEL.

The N-terminal stretch at 1 to 27 (MIMFLPVGRMSLGILILFLTGGNLVSA) is a signal peptide. The Extracellular segment spans residues 28–1106 (SEERQEPMHA…EFVSEPFVIG (1079 aa)). Residues 205–234 (GLASESSAASPQESISNEIENVTEEPTQPA) are disordered. Residues 207-220 (ASESSAASPQESIS) show a composition bias toward low complexity. Residues 221–230 (NEIENVTEEP) are compositionally biased toward polar residues. N225 carries N-linked (GlcNAc...) asparagine glycosylation. The SEA 1 domain occupies 235-349 (AEQIAEFSIQ…KPTAVYTISN (115 aa)). Residues 255 to 263 (RDPSSALYR) are hyaluronan-binding motif involved in chondroitin sulfate A-binding. Residues N297, N316, and N366 are each glycosylated (N-linked (GlcNAc...) asparagine). T427, T428, and T429 each carry an O-linked (GalNAc...) threonine glycan. The N-linked (GlcNAc...) asparagine glycan is linked to N582. O-linked (GalNAc...) threonine glycans are attached at residues T701, T704, and T712. A compositionally biased stretch (basic and acidic residues) spans 748–762 (EDMVHTESSSHKELD). The interval 748-768 (EDMVHTESSSHKELDSEVPVS) is disordered. O-linked (GalNAc...) threonine glycosylation is found at T817 and T888. The 114-residue stretch at 900 to 1013 (GALVVFFSLR…YSLDVESGDE (114 aa)) folds into the SEA 2 domain. 2 N-linked (GlcNAc...) asparagine glycosylation sites follow: N945 and N959. EGF-like domains are found at residues 1013 to 1054 (EANP…LPCQ) and 1055 to 1096 (SLCD…QHCE). Intrachain disulfides connect C1017-C1028, C1022-C1039, C1041-C1053, C1057-C1070, C1064-C1080, and C1082-C1095. The hyaluronan-binding motif involved in chondroitin sulfate C-binding stretch occupies residues 1083–1091 (RVGSNWWYR). Residues 1107–1127 (ITIASVVSFLLVASAVVFFLV) form a helical membrane-spanning segment. The hyaluronan-binding motif involved in chondroitin sulfate A- and C-binding stretch occupies residues 1128 to 1136 (KMLQAQNVR). Residues 1128 to 1243 (KMLQAQNVRR…FVREHQMEEL (116 aa)) lie on the Cytoplasmic side of the membrane. The interval 1139–1147 (RQRPTSSSR) is hyaluronan-binding motif involved in chondroitin sulfate C-binding. Residues 1212-1220 (KEEIQERMR) are hyaluronan-binding motif involved in chondroitin sulfate A- and C-binding motif.

As to expression, expressed in the retina (at protein level). Expressed in the pineal gland.

It localises to the photoreceptor outer segment membrane. The protein resides in the photoreceptor inner segment membrane. It is found in the secreted. The protein localises to the extracellular space. Its subcellular location is the extracellular matrix. It localises to the interphotoreceptor matrix. In terms of biological role, chondroitin sulfate- and hyaluronan-binding proteoglycan involved in the organization of interphotoreceptor matrix; may participate in the maturation and maintenance of the light-sensitive photoreceptor outer segment. Binds heparin. The chain is Interphotoreceptor matrix proteoglycan 2 (Impg2) from Mus musculus (Mouse).